The following is a 513-amino-acid chain: ATP synthase subunit alpha (513 aa).

Glycine 169 to threonine 176 serves as a coordination point for ATP.

This sequence belongs to the ATPase alpha/beta chains family. F-type ATPases have 2 components, CF(1) - the catalytic core - and CF(0) - the membrane proton channel. CF(1) has five subunits: alpha(3), beta(3), gamma(1), delta(1), epsilon(1). CF(0) has three main subunits: a(1), b(2) and c(9-12). The alpha and beta chains form an alternating ring which encloses part of the gamma chain. CF(1) is attached to CF(0) by a central stalk formed by the gamma and epsilon chains, while a peripheral stalk is formed by the delta and b chains.

It is found in the cell inner membrane. It carries out the reaction ATP + H2O + 4 H(+)(in) = ADP + phosphate + 5 H(+)(out). Produces ATP from ADP in the presence of a proton gradient across the membrane. The alpha chain is a regulatory subunit. In Shewanella baltica (strain OS223), this protein is ATP synthase subunit alpha.